A 253-amino-acid polypeptide reads, in one-letter code: Snake venom serine proteinase 14 (253 aa).

Positions 1 to 18 (MVLIRVLANLLILQLSYA) are cleaved as a signal peptide. Positions 19-24 (QKSSEL) are excised as a propeptide. The 220-residue stretch at 25 to 244 (VIGGDECNIN…YTDWIQSIIA (220 aa)) folds into the Peptidase S1 domain. 6 disulfides stabilise this stretch: C31–C158, C49–C65, C93–C251, C137–C205, C169–C184, and C195–C220. Active-site charge relay system residues include H64 and D105. 3 N-linked (GlcNAc...) asparagine glycosylation sites follow: N116, N117, and N149. S199 functions as the Charge relay system in the catalytic mechanism.

This sequence belongs to the peptidase S1 family. Snake venom subfamily. Monomer. In terms of tissue distribution, expressed by the venom gland.

The protein localises to the secreted. Functionally, snake venom serine protease that may act in the hemostasis system of the prey. This chain is Snake venom serine proteinase 14, found in Crotalus adamanteus (Eastern diamondback rattlesnake).